Consider the following 358-residue polypeptide: Peptide chain release factor 1 (358 aa).

Glutamine 233 is modified (N5-methylglutamine).

This sequence belongs to the prokaryotic/mitochondrial release factor family. Methylated by PrmC. Methylation increases the termination efficiency of RF1.

The protein localises to the cytoplasm. Functionally, peptide chain release factor 1 directs the termination of translation in response to the peptide chain termination codons UAG and UAA. This Staphylococcus carnosus (strain TM300) protein is Peptide chain release factor 1.